The chain runs to 595 residues: FERM domain-containing protein 3 (595 aa).

Residues 32 to 312 form the FERM domain; that stretch reads MKCTIRLLDD…ENQAFYKYAK (281 aa). The helical transmembrane segment at 529-549 threads the bilayer; the sequence is LLVVGLGLLLFVFPLLLLLLE.

The protein localises to the membrane. In terms of biological role, putative tumor suppressor gene that may be implicated in the origin and progression of lung cancer. The sequence is that of FERM domain-containing protein 3 (Frmd3) from Mus musculus (Mouse).